The sequence spans 500 residues: L-arabinose isomerase (500 aa).

Residues E306, E333, H350, and H450 each contribute to the Mn(2+) site.

The protein belongs to the arabinose isomerase family. Homohexamer. Requires Mn(2+) as cofactor.

The enzyme catalyses beta-L-arabinopyranose = L-ribulose. It participates in carbohydrate degradation; L-arabinose degradation via L-ribulose; D-xylulose 5-phosphate from L-arabinose (bacterial route): step 1/3. In terms of biological role, catalyzes the conversion of L-arabinose to L-ribulose. The polypeptide is L-arabinose isomerase (Escherichia fergusonii (strain ATCC 35469 / DSM 13698 / CCUG 18766 / IAM 14443 / JCM 21226 / LMG 7866 / NBRC 102419 / NCTC 12128 / CDC 0568-73)).